A 225-amino-acid chain; its full sequence is UPF0758 protein Ping_0056 (225 aa).

Residues 103–225 (ALTSAAQTKA…CTSFAENGWI (123 aa)) enclose the MPN domain. Zn(2+) contacts are provided by His-174, His-176, and Asp-187. Positions 174 to 187 (HNHPSGDPSASEAD) match the JAMM motif motif.

Belongs to the UPF0758 family.

In Psychromonas ingrahamii (strain DSM 17664 / CCUG 51855 / 37), this protein is UPF0758 protein Ping_0056.